The chain runs to 1189 residues: Pesticidal crystal protein Cry1Ca (1189 aa).

Belongs to the delta endotoxin family.

In terms of biological role, promotes colloidosmotic lysis by binding to the midgut epithelial cells of many lepidopteran larvae including Spodoptera species. This chain is Pesticidal crystal protein Cry1Ca (cry1Ca), found in Bacillus thuringiensis subsp. aizawai.